The sequence spans 234 residues: Enolase-phosphatase E1 (234 aa).

Mg(2+) contacts are provided by D10 and E12. Residues 125–126 (SS) and K162 contribute to the substrate site. A Mg(2+)-binding site is contributed by D188.

The protein belongs to the HAD-like hydrolase superfamily. MasA/MtnC family. As to quaternary structure, monomer. Mg(2+) is required as a cofactor.

It localises to the cytoplasm. The protein resides in the nucleus. It catalyses the reaction 5-methylsulfanyl-2,3-dioxopentyl phosphate + H2O = 1,2-dihydroxy-5-(methylsulfanyl)pent-1-en-3-one + phosphate. Its pathway is amino-acid biosynthesis; L-methionine biosynthesis via salvage pathway; L-methionine from S-methyl-5-thio-alpha-D-ribose 1-phosphate: step 3/6. The protein operates within amino-acid biosynthesis; L-methionine biosynthesis via salvage pathway; L-methionine from S-methyl-5-thio-alpha-D-ribose 1-phosphate: step 4/6. Its function is as follows. Bifunctional enzyme that catalyzes the enolization of 2,3-diketo-5-methylthiopentyl-1-phosphate (DK-MTP-1-P) into the intermediate 2-hydroxy-3-keto-5-methylthiopentenyl-1-phosphate (HK-MTPenyl-1-P), which is then dephosphorylated to form the acireductone 1,2-dihydroxy-3-keto-5-methylthiopentene (DHK-MTPene). The sequence is that of Enolase-phosphatase E1 from Sordaria macrospora (strain ATCC MYA-333 / DSM 997 / K(L3346) / K-hell).